A 181-amino-acid polypeptide reads, in one-letter code: Crossover junction endodeoxyribonuclease RuvC (181 aa).

Catalysis depends on residues aspartate 7, glutamate 67, and aspartate 139. Positions 7, 67, and 139 each coordinate Mg(2+).

This sequence belongs to the RuvC family. As to quaternary structure, homodimer which binds Holliday junction (HJ) DNA. The HJ becomes 2-fold symmetrical on binding to RuvC with unstacked arms; it has a different conformation from HJ DNA in complex with RuvA. In the full resolvosome a probable DNA-RuvA(4)-RuvB(12)-RuvC(2) complex forms which resolves the HJ. The cofactor is Mg(2+).

It localises to the cytoplasm. It carries out the reaction Endonucleolytic cleavage at a junction such as a reciprocal single-stranded crossover between two homologous DNA duplexes (Holliday junction).. In terms of biological role, the RuvA-RuvB-RuvC complex processes Holliday junction (HJ) DNA during genetic recombination and DNA repair. Endonuclease that resolves HJ intermediates. Cleaves cruciform DNA by making single-stranded nicks across the HJ at symmetrical positions within the homologous arms, yielding a 5'-phosphate and a 3'-hydroxyl group; requires a central core of homology in the junction. The consensus cleavage sequence is 5'-(A/T)TT(C/G)-3'. Cleavage occurs on the 3'-side of the TT dinucleotide at the point of strand exchange. HJ branch migration catalyzed by RuvA-RuvB allows RuvC to scan DNA until it finds its consensus sequence, where it cleaves and resolves the cruciform DNA. This Ralstonia pickettii (strain 12J) protein is Crossover junction endodeoxyribonuclease RuvC.